The primary structure comprises 510 residues: Protein phosphatase 1H (510 aa).

Residues 73–503 (STGYAEVINA…DDISVYVIPL (431 aa)) enclose the PPM-type phosphatase domain. 2 disordered regions span residues 105–128 (VQSTPNKNSSSKRRSSLPNAEGLQ) and 188–225 (LGEEPESTSSNSRTLTRAASLRGGSGAPGSPSTPPTRF).

The protein belongs to the PP2C family.

It localises to the nucleus. Its subcellular location is the cytoplasm. It catalyses the reaction O-phospho-L-seryl-[protein] + H2O = L-seryl-[protein] + phosphate. The catalysed reaction is O-phospho-L-threonyl-[protein] + H2O = L-threonyl-[protein] + phosphate. This Xenopus tropicalis (Western clawed frog) protein is Protein phosphatase 1H (ppm1h).